Reading from the N-terminus, the 262-residue chain is Tritrans,polycis-undecaprenyl-diphosphate synthase (GGDP specific) (262 aa).

The active site involves D40. Residue D40 coordinates Mg(2+). Substrate is bound by residues 41–44 (GNRR), W45, and 85–87 (SAE). N88 (proton acceptor) is an active-site residue. Residues R92, R211, and 217-219 (RIS) contribute to the substrate site. A Mg(2+)-binding site is contributed by E230.

This sequence belongs to the UPP synthase family. As to quaternary structure, homodimer. It depends on Mg(2+) as a cofactor.

It carries out the reaction geranylgeranyl diphosphate + 7 isopentenyl diphosphate = tri-trans,hepta-cis-undecaprenyl diphosphate + 7 diphosphate. Functionally, generates tritrans,heptacis-undecaprenyl diphosphate from isopentenyl pyrophosphate (IPP) and geranylgeranyl diphosphate. It is probably the precursor of glycosyl carrier lipids. This chain is Tritrans,polycis-undecaprenyl-diphosphate synthase (GGDP specific) (uppS), found in Sulfolobus acidocaldarius (strain ATCC 33909 / DSM 639 / JCM 8929 / NBRC 15157 / NCIMB 11770).